Here is a 145-residue protein sequence, read N- to C-terminus: UPF0735 ACT domain-containing protein CLD_1535 (145 aa).

The region spanning 69-144 is the ACT domain; it reads TIGLLLGHER…NVIKVDLIAM (76 aa).

The protein belongs to the UPF0735 family.

The sequence is that of UPF0735 ACT domain-containing protein CLD_1535 from Clostridium botulinum (strain Okra / Type B1).